The sequence spans 81 residues: Small ribosomal subunit protein bS16 (81 aa).

The protein belongs to the bacterial ribosomal protein bS16 family.

This Clostridium perfringens (strain ATCC 13124 / DSM 756 / JCM 1290 / NCIMB 6125 / NCTC 8237 / Type A) protein is Small ribosomal subunit protein bS16.